The primary structure comprises 608 residues: Putative multicopper oxidase GMC1 (608 aa).

3 consecutive Plastocyanin-like domains span residues 51–163 (INGY…LIVE), 243–374 (LING…ELYR), and 421–548 (ERTF…FEVP). Cu cation is bound by residues His100, His102, His145, and His147. Cu cation-binding residues include His452, His455, His457, His530, Cys531, His532, and His536.

The protein belongs to the multicopper oxidase family. Requires Cu cation as cofactor.

Its function is as follows. Could be an iron transport multicopper oxidase, which is required for Fe(2+) high affinity uptake. May be required to oxidize Fe(2+) and release it from the transporter. Essential component of copper-dependent iron transport. Involved in meiotic prophase and synaptonemal complex (SC) assembly. This Saccharomyces cerevisiae (strain ATCC 204508 / S288c) (Baker's yeast) protein is Putative multicopper oxidase GMC1 (GMC1).